Consider the following 734-residue polypeptide: MALQTPVLSPATPTVMAESALYRQRLEVIAEKRRLQEEIGAARRELEEEKLRVERLKRKSLRERWLMDGAAEGPERPEEPASKDPQSPEGQAQARIRNLEDSLFSLQSQLQLLQSASTGAQHRPAGRPAWRREGPRPLSQSAMEAAPTAPTDVDKRTSLPDAPVGMSPESPSDPREESIAVLPASRPSTEAIGTSSEANGPCPGHSPLPEQLSLGVSSVTKAKGDGAVEVVWAGLRATENSATGPTDVELEAKVEEVVLEAIGARQGTSSPELPTWVKEGRGVVEVVWEGLGGRDLDVTGESGRDAEATHTSSRRLQEQFEAETCRKEEGASRDSLEGVGQGGPGVEEGSFIWVERVALSEDWEEILMEGLEAPQGAGSAGEPEALIGAQPRGGEASWEVEKREVEKVEGIEEKGRAEKLGAEREDGVAVLPDETQGREENEAEKVERKDSEGPFPAEIATDEEKWEVKTTEGEESLEVEKGGEAEPVTTEKPLVTEKKPEGSLETERKGSEMPLDQEKDGEGSLDRESKTTEILLDGEIGDKSSLDETKGSKKLLDEKTGGEGSLDEEAEGSKKLLDREADGIEPFSEVDKTSGAKDDVSPEEQGKANEGAEFQAEDASPPGATVCVQDEPRSEEQGQQEPEKQEGLVEGAASKPEPCTEREGPPGDATLLLAETPAPEQPVESQPLLHQEASSTNPGDHPAPTYAPAQQLELAEAKEASGPKQKTCQCCVVM.

Residues 19-64 (SALYRQRLEVIAEKRRLQEEIGAARRELEEEKLRVERLKRKSLRER) are a coiled coil. 2 disordered regions span residues 62–100 (RERW…RNLE) and 114–217 (QSAS…LGVS). A compositionally biased stretch (basic and acidic residues) spans 73–82 (GPERPEEPAS). The stretch at 90-116 (GQAQARIRNLEDSLFSLQSQLQLLQSA) forms a coiled coil. 5 positions are modified to phosphoserine: Ser-139, Ser-158, Ser-167, Ser-170, and Ser-172. Over residues 186-198 (RPSTEAIGTSSEA) the composition is skewed to polar residues. At Ser-270 the chain carries Phosphoserine. Basic and acidic residues predominate over residues 297-308 (DVTGESGRDAEA). Disordered stretches follow at residues 297-347 (DVTG…PGVE), 374-400 (PQGA…SWEV), and 413-709 (EKGR…YAPA). The residue at position 311 (Thr-311) is a Phosphothreonine. Residues 315 to 336 (RLQEQFEAETCRKEEGASRDSL) are compositionally biased toward basic and acidic residues. A phosphoserine mark is found at Ser-332 and Ser-335. Basic and acidic residues-rich tracts occupy residues 413 to 427 (EKGR…REDG), 435 to 452 (TQGR…KDSE), 462 to 484 (DEEK…KGGE), 494 to 531 (LVTE…ESKT), 540 to 561 (IGDK…EKTG), 571 to 582 (EGSKKLLDREAD), 589 to 607 (EVDK…EQGK), and 630 to 647 (DEPR…KQEG). Ser-451 bears the Phosphoserine mark. Position 601 is a phosphoserine (Ser-601). A Phosphoserine modification is found at Ser-721. S-palmitoyl cysteine attachment occurs at residues Cys-728 and Cys-730. Cys-731 is modified (cysteine methyl ester). Cys-731 carries the S-farnesyl cysteine lipid modification. Positions 732–734 (VVM) are cleaved as a propeptide — removed in mature form.

This sequence belongs to the paralemmin family. In terms of assembly, interacts with SIGIRR. Palmitoylated on Cys-728 and Cys-730 and prenylated on Cys-731; which is required for membrane association.

It localises to the cytoplasm. It is found in the cell membrane. Functionally, ATP-binding protein, which may act as a adapter in the Toll-like receptor (TLR) signaling. The chain is Paralemmin-3 (Palm3) from Mus musculus (Mouse).